Here is a 404-residue protein sequence, read N- to C-terminus: MKREVKKVVLAYSGGLDTSVILKWLQDEYKCEVVTFTADIGQGEEVEPARAKALALGIKPENIFIDDLREEFVKDYVFPMFRANAIYEGEYLLGTSIARPLIAKRQVEIAHLTNADGVSHGATGKGNDQVRFEMGYLSKDSTLTVIAPWREWDLNSREKLLAYAEEHGIQIEKKGKKSPYSMDANLLHISYEGGILEDPNAEPEDSMWLWTTKPEDAPNTPEYITIGYENGDPVSLNGEKLTPATMLETLNKIAGKHGIGRADIVENRYVGMKSRGCYETPGGTIMLKGHRAIESITLDREEAHLKDELMPRYAKLIYNGFWFSPEREMLQAAIDTTQKNVKGSVKLKLYKGSVMVVGRSSEFSLFNPEYCTFEEDAVYDQKDAAGFIKLNALRFIIAGKARKK.

Residues Ala-11–Ser-19 and Ala-38 contribute to the ATP site. L-citrulline-binding residues include Tyr-91 and Ser-96. Residue Gly-121 coordinates ATP. Residues Thr-123, Asn-127, and Asp-128 each contribute to the L-aspartate site. Asn-127 is a binding site for L-citrulline. L-citrulline is bound by residues Arg-131, Ser-181, Ser-190, Glu-266, and Tyr-278.

Belongs to the argininosuccinate synthase family. Type 1 subfamily. In terms of assembly, homotetramer.

It localises to the cytoplasm. The catalysed reaction is L-citrulline + L-aspartate + ATP = 2-(N(omega)-L-arginino)succinate + AMP + diphosphate + H(+). It participates in amino-acid biosynthesis; L-arginine biosynthesis; L-arginine from L-ornithine and carbamoyl phosphate: step 2/3. This Sulfurimonas denitrificans (strain ATCC 33889 / DSM 1251) (Thiomicrospira denitrificans (strain ATCC 33889 / DSM 1251)) protein is Argininosuccinate synthase.